The following is a 161-amino-acid chain: Cell wall protein YLR042C (161 aa).

Positions 1–24 (MKISQFGSLAFAPIVLLQLFIVQA) are cleaved as a signal peptide. Residues asparagine 77, asparagine 104, and asparagine 120 are each glycosylated (N-linked (GlcNAc...) asparagine). The tract at residues 111-139 (FTPLPSSSRNETKSSQTTNTISSSTSTGG) is disordered. Positions 123 to 137 (KSSQTTNTISSSTST) are enriched in low complexity. A lipid anchor (GPI-anchor amidated glycine) is attached at glycine 139. A propeptide spans 140-161 (VGSVKPCLYFVLMLETIAYLFS) (removed in mature form).

Post-translationally, the GPI-anchor is attached to the protein in the endoplasmic reticulum and serves to target the protein to the cell surface. There, the glucosamine-inositol phospholipid moiety is cleaved off and the GPI-modified mannoprotein is covalently attached via its lipidless GPI glycan remnant to the 1,6-beta-glucan of the outer cell wall layer.

It localises to the secreted. Its subcellular location is the cell wall. The protein localises to the membrane. The sequence is that of Cell wall protein YLR042C from Saccharomyces cerevisiae (strain ATCC 204508 / S288c) (Baker's yeast).